The sequence spans 149 residues: 3-dehydroquinate dehydratase (149 aa).

Residue Tyr-26 is the Proton acceptor of the active site. Residues Asn-77, His-83, and Asp-90 each coordinate substrate. His-103 (proton donor) is an active-site residue. Residues 104 to 105 and Arg-114 contribute to the substrate site; that span reads LS.

The protein belongs to the type-II 3-dehydroquinase family. As to quaternary structure, homododecamer.

It catalyses the reaction 3-dehydroquinate = 3-dehydroshikimate + H2O. The protein operates within metabolic intermediate biosynthesis; chorismate biosynthesis; chorismate from D-erythrose 4-phosphate and phosphoenolpyruvate: step 3/7. In terms of biological role, catalyzes a trans-dehydration via an enolate intermediate. In Edwardsiella ictaluri (strain 93-146), this protein is 3-dehydroquinate dehydratase.